The primary structure comprises 199 residues: Translation initiation factor IF-3 (199 aa).

It belongs to the IF-3 family. As to quaternary structure, monomer.

The protein localises to the cytoplasm. IF-3 binds to the 30S ribosomal subunit and shifts the equilibrium between 70S ribosomes and their 50S and 30S subunits in favor of the free subunits, thus enhancing the availability of 30S subunits on which protein synthesis initiation begins. The chain is Translation initiation factor IF-3 from Mycoplasmopsis pulmonis (strain UAB CTIP) (Mycoplasma pulmonis).